We begin with the raw amino-acid sequence, 196 residues long: Holliday junction branch migration complex subunit RuvA (196 aa).

A domain I region spans residues 1 to 62 (MYEYINGLIT…ENDISLYGFI (62 aa)). Positions 63–141 (DADEKALFNK…ELASKTGMVD (79 aa)) are domain II. Residues 142–148 (SSSNPEQ) form a flexible linker region. Positions 148–196 (QSQALDDALEALLALGYTAKDVKAVAQIIGRNSDTTDGYIRSALKLLVK) are domain III.

It belongs to the RuvA family. As to quaternary structure, homotetramer. Forms an RuvA(8)-RuvB(12)-Holliday junction (HJ) complex. HJ DNA is sandwiched between 2 RuvA tetramers; dsDNA enters through RuvA and exits via RuvB. An RuvB hexamer assembles on each DNA strand where it exits the tetramer. Each RuvB hexamer is contacted by two RuvA subunits (via domain III) on 2 adjacent RuvB subunits; this complex drives branch migration. In the full resolvosome a probable DNA-RuvA(4)-RuvB(12)-RuvC(2) complex forms which resolves the HJ.

Its subcellular location is the cytoplasm. Its function is as follows. The RuvA-RuvB-RuvC complex processes Holliday junction (HJ) DNA during genetic recombination and DNA repair, while the RuvA-RuvB complex plays an important role in the rescue of blocked DNA replication forks via replication fork reversal (RFR). RuvA specifically binds to HJ cruciform DNA, conferring on it an open structure. The RuvB hexamer acts as an ATP-dependent pump, pulling dsDNA into and through the RuvAB complex. HJ branch migration allows RuvC to scan DNA until it finds its consensus sequence, where it cleaves and resolves the cruciform DNA. In Leuconostoc mesenteroides subsp. mesenteroides (strain ATCC 8293 / DSM 20343 / BCRC 11652 / CCM 1803 / JCM 6124 / NCDO 523 / NBRC 100496 / NCIMB 8023 / NCTC 12954 / NRRL B-1118 / 37Y), this protein is Holliday junction branch migration complex subunit RuvA.